Consider the following 31-residue polypeptide: Cuticle protein 54 (31 aa).

2 consecutive repeat copies span residues 7 to 10 (AAPA) and 13 to 17 (AAPAI).

Component of the cuticle of migratory locust which contains more than 100 different structural proteins. This is Cuticle protein 54 from Locusta migratoria (Migratory locust).